A 428-amino-acid chain; its full sequence is Glutamine synthetase, chloroplastic (428 aa).

The N-terminal 49 residues, Met1 to Ala49, are a transit peptide targeting the chloroplast. The region spanning Ile75–Gly155 is the GS beta-grasp domain. Residues Arg94–Pro120 form a disordered region. At Ser104 the chain carries Phosphoserine. One can recognise a GS catalytic domain in the interval Pro159–Val428.

This sequence belongs to the glutamine synthetase family. Homooctamer.

It localises to the plastid. The protein resides in the chloroplast. The catalysed reaction is L-glutamate + NH4(+) + ATP = L-glutamine + ADP + phosphate + H(+). The light-modulated chloroplast enzyme, encoded by a nuclear gene and expressed primarily in leaves, is responsible for the reassimilation of the ammonia generated by photorespiration. The polypeptide is Glutamine synthetase, chloroplastic (GLN2) (Brassica napus (Rape)).